A 281-amino-acid chain; its full sequence is Biotin synthase (281 aa).

The region spanning 1 to 230 is the Radical SAM core domain; it reads MNQKIFLCSI…AQRIMVAGGR (230 aa). The [4Fe-4S] cluster site is built by Cys18, Cys22, and Cys25. Cys62, Cys97, and Arg223 together coordinate [2Fe-2S] cluster.

It belongs to the radical SAM superfamily. Biotin synthase family. Homodimer. [4Fe-4S] cluster serves as cofactor. The cofactor is [2Fe-2S] cluster.

It carries out the reaction (4R,5S)-dethiobiotin + (sulfur carrier)-SH + 2 reduced [2Fe-2S]-[ferredoxin] + 2 S-adenosyl-L-methionine = (sulfur carrier)-H + biotin + 2 5'-deoxyadenosine + 2 L-methionine + 2 oxidized [2Fe-2S]-[ferredoxin]. It functions in the pathway cofactor biosynthesis; biotin biosynthesis; biotin from 7,8-diaminononanoate: step 2/2. Catalyzes the conversion of dethiobiotin (DTB) to biotin by the insertion of a sulfur atom into dethiobiotin via a radical-based mechanism. The polypeptide is Biotin synthase (Sulfurimonas denitrificans (strain ATCC 33889 / DSM 1251) (Thiomicrospira denitrificans (strain ATCC 33889 / DSM 1251))).